A 442-amino-acid polypeptide reads, in one-letter code: Casein kinase 1-like protein 10 (442 aa).

Residues 9–278 form the Protein kinase domain; sequence FKLGRKIGSG…LKRLFRDLFI (270 aa). Residues 15–23 and Lys38 contribute to the ATP site; that span reads IGSGSFGEL. The active-site Proton acceptor is the Asp128. Disordered regions lie at residues 299-323 and 381-421; these read GSISKPRPNPKPALDPPGPSAERNE and AVMS…LSAR. The span at 305-317 shows a compositional bias: pro residues; the sequence is RPNPKPALDPPGP. A compositionally biased stretch (low complexity) spans 384–394; that stretch reads SSSQPGSSGEL. The span at 400 to 417 shows a compositional bias: polar residues; it reads SKLFSSSAQKIQPVQETK.

It belongs to the protein kinase superfamily. CK1 Ser/Thr protein kinase family. Casein kinase I subfamily. In terms of assembly, monomer. In terms of processing, autophosphorylated.

Its subcellular location is the cytoplasm. It is found in the cell junction. It localises to the plasmodesma. It carries out the reaction L-seryl-[protein] + ATP = O-phospho-L-seryl-[protein] + ADP + H(+). The enzyme catalyses L-threonyl-[protein] + ATP = O-phospho-L-threonyl-[protein] + ADP + H(+). Casein kinases are operationally defined by their preferential utilization of acidic proteins such as caseins as substrates. It can phosphorylate a large number of proteins. This Arabidopsis thaliana (Mouse-ear cress) protein is Casein kinase 1-like protein 10.